We begin with the raw amino-acid sequence, 320 residues long: Aspartate carbamoyltransferase catalytic subunit (320 aa).

2 residues coordinate carbamoyl phosphate: Arg68 and Thr69. Residue Lys96 participates in L-aspartate binding. 3 residues coordinate carbamoyl phosphate: Arg118, His148, and Gln151. Residues Arg181 and Arg236 each contribute to the L-aspartate site. Gly277 and Pro278 together coordinate carbamoyl phosphate.

This sequence belongs to the aspartate/ornithine carbamoyltransferase superfamily. ATCase family. As to quaternary structure, heterododecamer (2C3:3R2) of six catalytic PyrB chains organized as two trimers (C3), and six regulatory PyrI chains organized as three dimers (R2).

It catalyses the reaction carbamoyl phosphate + L-aspartate = N-carbamoyl-L-aspartate + phosphate + H(+). It participates in pyrimidine metabolism; UMP biosynthesis via de novo pathway; (S)-dihydroorotate from bicarbonate: step 2/3. Functionally, catalyzes the condensation of carbamoyl phosphate and aspartate to form carbamoyl aspartate and inorganic phosphate, the committed step in the de novo pyrimidine nucleotide biosynthesis pathway. This is Aspartate carbamoyltransferase catalytic subunit from Paracidovorax citrulli (strain AAC00-1) (Acidovorax citrulli).